Reading from the N-terminus, the 443-residue chain is D-inositol 3-phosphate glycosyltransferase (443 aa).

1D-myo-inositol 3-phosphate is bound at residue histidine 30. Residues 36–37 and glycine 44 each bind UDP-N-acetyl-alpha-D-glucosamine; that span reads QP. 1D-myo-inositol 3-phosphate contacts are provided by residues 41–46, lysine 99, tyrosine 132, threonine 156, and arginine 176; that span reads DAGGMN. The UDP-N-acetyl-alpha-D-glucosamine site is built by arginine 250, lysine 255, and arginine 316. 3 residues coordinate Mg(2+): phenylalanine 325, arginine 326, and cysteine 328. UDP-N-acetyl-alpha-D-glucosamine-binding residues include glutamate 338 and glutamate 346. Threonine 352 provides a ligand contact to Mg(2+).

Belongs to the glycosyltransferase group 1 family. MshA subfamily. Homodimer.

The enzyme catalyses 1D-myo-inositol 3-phosphate + UDP-N-acetyl-alpha-D-glucosamine = 1D-myo-inositol 2-acetamido-2-deoxy-alpha-D-glucopyranoside 3-phosphate + UDP + H(+). Functionally, catalyzes the transfer of a N-acetyl-glucosamine moiety to 1D-myo-inositol 3-phosphate to produce 1D-myo-inositol 2-acetamido-2-deoxy-glucopyranoside 3-phosphate in the mycothiol biosynthesis pathway. The chain is D-inositol 3-phosphate glycosyltransferase from Stackebrandtia nassauensis (strain DSM 44728 / CIP 108903 / NRRL B-16338 / NBRC 102104 / LLR-40K-21).